The following is an 801-amino-acid chain: MASPPPPPKLPVPGRRNILVTSALPYVNNVPHLGNIIGCVLSADVFARYCRLRGYNVIYICGTDEYGTATETKAMEEKCSPKEICDKYHAVHSEVYKWFDIKFDKFGRTSSPQQTEVCQAIFQKLMENNWLTENTMQQLYCDTCQRFLADRLVEGKCPTEGCNYEAARGDQCENCSKLLNPTELIDPKCKVCKNTPRVRDTDHLFLELPLLSDKLVNYINETSVAGMWSQNAIQATNAWLKEGLKPRCITRDLKWGVPVPHEKYKDKVFYVWFDAPIGYVSITASYTPDWEKWWKDPDNVELFQFMGKDNVPFHTVMFPSTLLGTGEKWTMMKTISVTEYLNYEAGKFSKSHGIGVFGNDAKDTNIPPEVWRYYLLTNRPEVSDTLFTWADLQAKLNSELLNNLGNFINRVLSFVAKPAGAGYDSIVPDAPNAESHPLTKALVEKTNKWVEQYLEAMEKVKLKQGLKSAMGISSDGNAYLQESQFWKLYKEDPAACAVVMKTSVGVVYLLACLLEPFMPSFSNEVLLQLNMTPEESLSFCDDKGEIAKAKRPWDFVSAGHKIGKPSPLFKELKDEEVESFRNKFAGSQAERSSKAQADAEAKKVADKLKGTKLSDGGQKKEQKKQSGGSKSKNAEVDVTVAKLDIRVGLIRKAQKHPDADSLYVEEIDVGEEAPRTVVSGLVKFIPLEEMQNRKVCVLCNLKPVAMRGIKSHAMVLAASNEDHTKVELVEPPESAAVGERVTFAGYSGEPEASLNAKSKTWEKLSADLHSNGELVACYKDVPFTTSAGVCKVKSIASGEIR.

The 'HIGH' region signature appears at 25–35; that stretch reads PYVNNVPHLGN. Positions 347–351 match the 'KMSKS' region motif; sequence KFSKS. Lys-350 lines the ATP pocket. The tract at residues 606-633 is disordered; sequence DKLKGTKLSDGGQKKEQKKQSGGSKSKN. The tRNA-binding domain maps to 639 to 742; it reads TVAKLDIRVG…ESAAVGERVT (104 aa).

The protein belongs to the class-I aminoacyl-tRNA synthetase family.

The protein resides in the cytoplasm. The enzyme catalyses tRNA(Met) + L-methionine + ATP = L-methionyl-tRNA(Met) + AMP + diphosphate. The sequence is that of Probable methionine--tRNA ligase from Oryza sativa subsp. japonica (Rice).